The following is a 361-amino-acid chain: Phospho-N-acetylmuramoyl-pentapeptide-transferase (361 aa).

10 helical membrane-spanning segments follow: residues 27-47 (GAMV…IDHL), 72-92 (TPTM…LLWA), 94-114 (LHNP…FVGF), 133-153 (LRLA…IWAG), 169-189 (FAIN…VGAG), 200-220 (GLAI…AYLV), 240-260 (LAVL…FNAP), 264-284 (IFMG…IAVA), 289-309 (IVLA…IVQV), and 338-358 (QIVI…LSTL).

Belongs to the glycosyltransferase 4 family. MraY subfamily. Requires Mg(2+) as cofactor.

Its subcellular location is the cell inner membrane. It catalyses the reaction UDP-N-acetyl-alpha-D-muramoyl-L-alanyl-gamma-D-glutamyl-meso-2,6-diaminopimeloyl-D-alanyl-D-alanine + di-trans,octa-cis-undecaprenyl phosphate = di-trans,octa-cis-undecaprenyl diphospho-N-acetyl-alpha-D-muramoyl-L-alanyl-D-glutamyl-meso-2,6-diaminopimeloyl-D-alanyl-D-alanine + UMP. The protein operates within cell wall biogenesis; peptidoglycan biosynthesis. In terms of biological role, catalyzes the initial step of the lipid cycle reactions in the biosynthesis of the cell wall peptidoglycan: transfers peptidoglycan precursor phospho-MurNAc-pentapeptide from UDP-MurNAc-pentapeptide onto the lipid carrier undecaprenyl phosphate, yielding undecaprenyl-pyrophosphoryl-MurNAc-pentapeptide, known as lipid I. This Afipia carboxidovorans (strain ATCC 49405 / DSM 1227 / KCTC 32145 / OM5) (Oligotropha carboxidovorans) protein is Phospho-N-acetylmuramoyl-pentapeptide-transferase.